Here is an 893-residue protein sequence, read N- to C-terminus: 104 kDa microneme/rhoptry antigen (893 aa).

An N-terminal signal peptide occupies residues 1–19; sequence MKFLVLLFNILCLFPILGA. 3 disordered regions span residues 492-666, 681-799, and 818-873; these read SKKK…FDPK, KTKE…PTGK, and KEHM…RKPD. Composition is skewed to basic and acidic residues over residues 525-565 and 573-591; these read SESK…EHKP and KRPE…ESPK. A compositionally biased stretch (low complexity) spans 595-606; the sequence is RPVSPQRPVSPK. Composition is skewed to basic and acidic residues over residues 731–755, 788–797, and 818–830; these read EEVK…DSPT, EAGRILRDPT, and KEHM…KIVV. Over residues 831–841 the composition is skewed to acidic residues; the sequence is DDDGTEADDED. The segment covering 851–869 has biased composition (basic residues); sequence STVRRRRPRPKKSSKSSKP. A lipid anchor (GPI-anchor amidated aspartate) is attached at Asp873. Residues 874 to 893 constitute a propeptide, removed in mature form; it reads SAFVPSIIFIFLVSLIVGIL.

It localises to the cell membrane. This chain is 104 kDa microneme/rhoptry antigen, found in Theileria annulata.